The following is a 637-amino-acid chain: Acetolactate synthase 2, chloroplastic (637 aa).

The N-terminal 73 residues, 1–73, are a transit peptide targeting the chloroplast; that stretch reads MASFSFFGTI…SSKYAPNVPR (73 aa). Residues 35–69 form a disordered region; it reads RRATRVSVSANSKKDQDRTASRRENPSTFSSKYAP. Basic and acidic residues predominate over residues 46–59; the sequence is SKKDQDRTASRREN. Glu120 provides a ligand contact to thiamine diphosphate. Residues Arg222, 329-350, and 372-391 contribute to the FAD site; these read HGTV…FGVR and DIDS…VCCD. Positions 462–542 are thiamine pyrophosphate binding; that stretch reads QHQMWAAQFY…VKVLLINNQH (81 aa). Asp513 and Asn540 together coordinate Mg(2+).

This sequence belongs to the TPP enzyme family. It depends on Mg(2+) as a cofactor. Requires thiamine diphosphate as cofactor.

The protein localises to the plastid. Its subcellular location is the chloroplast. The catalysed reaction is 2 pyruvate + H(+) = (2S)-2-acetolactate + CO2. The protein operates within amino-acid biosynthesis; L-isoleucine biosynthesis; L-isoleucine from 2-oxobutanoate: step 1/4. It participates in amino-acid biosynthesis; L-valine biosynthesis; L-valine from pyruvate: step 1/4. The protein is Acetolactate synthase 2, chloroplastic of Brassica napus (Rape).